Here is a 151-residue protein sequence, read N- to C-terminus: NADH dehydrogenase [ubiquinone] 1 beta subcomplex subunit 11, mitochondrial (151 aa).

A mitochondrion-targeting transit peptide spans 1 to 29 (MAARLLSLYGRCLSAAGAMRGLPAARVRW). Residues 40-62 (GVEKKRQREPTMQWQEDPEPEDE) form a disordered region. A helical transmembrane segment spans residues 87–107 (AVFFFGFSIVLVFGTTFVAYV).

Belongs to the complex I NDUFB11 subunit family. As to quaternary structure, complex I is composed of 45 different subunits. Interacts with BCAP31.

Its subcellular location is the mitochondrion inner membrane. Accessory subunit of the mitochondrial membrane respiratory chain NADH dehydrogenase (Complex I), that is believed not to be involved in catalysis. Complex I functions in the transfer of electrons from NADH to the respiratory chain. The immediate electron acceptor for the enzyme is believed to be ubiquinone. This Mus musculus (Mouse) protein is NADH dehydrogenase [ubiquinone] 1 beta subcomplex subunit 11, mitochondrial (Ndufb11).